A 174-amino-acid chain; its full sequence is Urease accessory protein UreE (174 aa).

The protein belongs to the UreE family.

It localises to the cytoplasm. Functionally, involved in urease metallocenter assembly. Binds nickel. Probably functions as a nickel donor during metallocenter assembly. This chain is Urease accessory protein UreE, found in Helicobacter hepaticus (strain ATCC 51449 / 3B1).